The sequence spans 42 residues: Potassium channel toxin gamma-KTx 1.10 (42 aa).

Cystine bridges form between C5-C23, C11-C34, C20-C39, and C24-C41.

Expressed by the venom gland.

It localises to the secreted. Blocks human Kv11.1/KCNH2/ERG1 potassium channels (reversible, IC(50)=3.4 nM). At high toxin concentrations, block of Kv11.1/KCNH2/ERG1 macroscopic current is almost complete. Does not accelerate the kinetics of the closing process and has no effect on the activation and inactivation kinetics of the Kv11.1/KCNH2/ERG1 channels. The protein is Potassium channel toxin gamma-KTx 1.10 of Centruroides margaritatus (Central American bark Scorpion).